The chain runs to 511 residues: ATP synthase subunit alpha (511 aa).

170–177 contacts ATP; it reads GDRQTGKT.

Belongs to the ATPase alpha/beta chains family. F-type ATPases have 2 components, CF(1) - the catalytic core - and CF(0) - the membrane proton channel. CF(1) has five subunits: alpha(3), beta(3), gamma(1), delta(1), epsilon(1). CF(0) has three main subunits: a(1), b(2) and c(9-12). The alpha and beta chains form an alternating ring which encloses part of the gamma chain. CF(1) is attached to CF(0) by a central stalk formed by the gamma and epsilon chains, while a peripheral stalk is formed by the delta and b chains.

The protein resides in the cell inner membrane. The enzyme catalyses ATP + H2O + 4 H(+)(in) = ADP + phosphate + 5 H(+)(out). Produces ATP from ADP in the presence of a proton gradient across the membrane. The alpha chain is a regulatory subunit. This is ATP synthase subunit alpha from Pelagibacter ubique (strain HTCC1062).